The sequence spans 112 residues: FK506-binding protein 1 (112 aa).

Polar residues predominate over residues M1–E10. Positions M1 to F20 are disordered. In terms of domain architecture, PPIase FKBP-type spans G24–N112.

The protein belongs to the FKBP-type PPIase family. FKBP1 subfamily.

The protein resides in the cytoplasm. It catalyses the reaction [protein]-peptidylproline (omega=180) = [protein]-peptidylproline (omega=0). Its activity is regulated as follows. Inhibited by both FK506 and rapamycin. PPIases accelerate the folding of proteins. It catalyzes the cis-trans isomerization of proline imidic peptide bonds in oligopeptides. The chain is FK506-binding protein 1 (FPR1) from Debaryomyces hansenii (strain ATCC 36239 / CBS 767 / BCRC 21394 / JCM 1990 / NBRC 0083 / IGC 2968) (Yeast).